The following is a 312-amino-acid chain: Ribosomal protein L11 methyltransferase (312 aa).

4 residues coordinate S-adenosyl-L-methionine: threonine 160, glycine 181, aspartate 203, and asparagine 246.

Belongs to the methyltransferase superfamily. PrmA family.

Its subcellular location is the cytoplasm. The catalysed reaction is L-lysyl-[protein] + 3 S-adenosyl-L-methionine = N(6),N(6),N(6)-trimethyl-L-lysyl-[protein] + 3 S-adenosyl-L-homocysteine + 3 H(+). Its function is as follows. Methylates ribosomal protein L11. In Staphylococcus aureus (strain MRSA252), this protein is Ribosomal protein L11 methyltransferase.